An 848-amino-acid polypeptide reads, in one-letter code: Adenylate cyclase (848 aa).

A catalytic region spans residues 1 to 535 (MYLYIETLKQ…DISHHFPLRL (535 aa)). The interval 541–848 (KALYSPCEIR…SQPAQQFQLH (308 aa)) is regulatory.

The protein belongs to the adenylyl cyclase class-1 family.

It is found in the cytoplasm. It carries out the reaction ATP = 3',5'-cyclic AMP + diphosphate. Its activity is regulated as follows. The regulatory domain is involved in the regulation of cyclase activity by the carbon source. The protein is Adenylate cyclase (cya) of Yersinia intermedia.